A 61-amino-acid chain; its full sequence is Small ribosomal subunit protein uS14 (61 aa).

Cysteine 24, cysteine 27, cysteine 40, and cysteine 43 together coordinate Zn(2+).

Belongs to the universal ribosomal protein uS14 family. Zinc-binding uS14 subfamily. As to quaternary structure, part of the 30S ribosomal subunit. Contacts proteins S3 and S10. Requires Zn(2+) as cofactor.

Functionally, binds 16S rRNA, required for the assembly of 30S particles and may also be responsible for determining the conformation of the 16S rRNA at the A site. This is Small ribosomal subunit protein uS14 from Bifidobacterium adolescentis (strain ATCC 15703 / DSM 20083 / NCTC 11814 / E194a).